The primary structure comprises 312 residues: Homoserine O-succinyltransferase (312 aa).

Residue Cys-142 is the Acyl-thioester intermediate of the active site. Lys-163 and Ser-192 together coordinate substrate. His-235 functions as the Proton acceptor in the catalytic mechanism. The active site involves Glu-237. A substrate-binding site is contributed by Arg-249.

The protein belongs to the MetA family.

It localises to the cytoplasm. It carries out the reaction L-homoserine + succinyl-CoA = O-succinyl-L-homoserine + CoA. Its pathway is amino-acid biosynthesis; L-methionine biosynthesis via de novo pathway; O-succinyl-L-homoserine from L-homoserine: step 1/1. Its function is as follows. Transfers a succinyl group from succinyl-CoA to L-homoserine, forming succinyl-L-homoserine. This chain is Homoserine O-succinyltransferase, found in Aliivibrio salmonicida (strain LFI1238) (Vibrio salmonicida (strain LFI1238)).